Here is a 179-residue protein sequence, read N- to C-terminus: MSAARGAVIWMTGLSGAGKSTLANALHLRLKEAGQAAIVLDGDVLRRGLNADLGFTPEDRTENLRRVAHVAALFMQQGFVVIAAVISPEHRHRRAAREIVGEGFVEVFVNAPLQVCEARDAKGLYARARRGEIAHFTGISDPFEAPLAADLVIETDRMPVNEGVDRLLAHLVTMGRVSG.

13-20 (GLSGAGKS) contributes to the ATP binding site. The active-site Phosphoserine intermediate is the serine 87.

This sequence belongs to the APS kinase family.

The catalysed reaction is adenosine 5'-phosphosulfate + ATP = 3'-phosphoadenylyl sulfate + ADP + H(+). The protein operates within sulfur metabolism; hydrogen sulfide biosynthesis; sulfite from sulfate: step 2/3. Functionally, catalyzes the synthesis of activated sulfate. In Paraburkholderia xenovorans (strain LB400), this protein is Adenylyl-sulfate kinase.